A 350-amino-acid polypeptide reads, in one-letter code: tRNA uridine(34) hydroxylase (350 aa).

Positions 146-240 (DDPDAVFIDM…YARKAREQGL (95 aa)) constitute a Rhodanese domain. The active-site Cysteine persulfide intermediate is cysteine 200. The segment at 314 to 350 (PEEEQRRRRAGRENGNKIFNKSRGRLNTQLGIPDPAE) is disordered. Basic and acidic residues predominate over residues 316-328 (EEQRRRRAGRENG).

Belongs to the TrhO family.

It catalyses the reaction uridine(34) in tRNA + AH2 + O2 = 5-hydroxyuridine(34) in tRNA + A + H2O. Catalyzes oxygen-dependent 5-hydroxyuridine (ho5U) modification at position 34 in tRNAs. The polypeptide is tRNA uridine(34) hydroxylase (Citrobacter koseri (strain ATCC BAA-895 / CDC 4225-83 / SGSC4696)).